We begin with the raw amino-acid sequence, 147 residues long: Myoglobin (147 aa).

Residues 2–141 (ADFDAVLKFW…FIADMDANYK (140 aa)) enclose the Globin domain. Nitrite is bound at residue histidine 60. Histidine 60 is a binding site for O2. Histidine 89 contributes to the heme b binding site.

Belongs to the globin family. As to quaternary structure, monomeric.

Its subcellular location is the cytoplasm. It localises to the sarcoplasm. The catalysed reaction is Fe(III)-heme b-[protein] + nitric oxide + H2O = Fe(II)-heme b-[protein] + nitrite + 2 H(+). It carries out the reaction H2O2 + AH2 = A + 2 H2O. Monomeric heme protein which primary function is to store oxygen and facilitate its diffusion within muscle tissues. Reversibly binds oxygen through a pentacoordinated heme iron and enables its timely and efficient release as needed during periods of heightened demand. Depending on the oxidative conditions of tissues and cells, and in addition to its ability to bind oxygen, it also has a nitrite reductase activity whereby it regulates the production of bioactive nitric oxide. Under stress conditions, like hypoxia and anoxia, it also protects cells against reactive oxygen species thanks to its pseudoperoxidase activity. The chain is Myoglobin (mb) from Scomber japonicus (Chub mackerel).